Here is a 459-residue protein sequence, read N- to C-terminus: Flavin-containing monooxygenase FMO GS-OX5 (459 aa).

An FAD-binding site is contributed by 17–22 (GAGAAG). 212 to 217 (GNFASG) contributes to the NADP(+) binding site.

This sequence belongs to the FMO family.

The enzyme catalyses a (Z)-omega-(methylsulfanyl)-N-sulfo-alkylhydroximate S-glucoside + NADPH + O2 + H(+) = a (Z)-omega-(methylsulfinyl)-alkyl-glucosinolate + NADP(+) + H2O. In terms of biological role, catalyzes the conversion of methylthioalkyl glucosinolates into methylsulfinylalkyl glucosinolates. Specific for 8-methylthiooctyl (8-MTO) glucosinolates. The protein is Flavin-containing monooxygenase FMO GS-OX5 (FMOGS-OX5) of Arabidopsis thaliana (Mouse-ear cress).